The following is a 360-amino-acid chain: Phospho-N-acetylmuramoyl-pentapeptide-transferase (360 aa).

The next 10 helical transmembrane spans lie at 27-47 (GALI…ISSL), 70-90 (GTPT…SILW), 93-113 (LSSV…AIGF), 134-154 (LALE…AGQE), 168-188 (LLLN…VGAG), 205-225 (VMVA…AIFA), 239-259 (LSVI…FNAP), 262-282 (AIFM…TVAV), 288-308 (IVLA…IIQV), and 337-357 (QVVI…LSTL).

This sequence belongs to the glycosyltransferase 4 family. MraY subfamily. Requires Mg(2+) as cofactor.

It localises to the cell inner membrane. It carries out the reaction UDP-N-acetyl-alpha-D-muramoyl-L-alanyl-gamma-D-glutamyl-meso-2,6-diaminopimeloyl-D-alanyl-D-alanine + di-trans,octa-cis-undecaprenyl phosphate = di-trans,octa-cis-undecaprenyl diphospho-N-acetyl-alpha-D-muramoyl-L-alanyl-D-glutamyl-meso-2,6-diaminopimeloyl-D-alanyl-D-alanine + UMP. It functions in the pathway cell wall biogenesis; peptidoglycan biosynthesis. Functionally, catalyzes the initial step of the lipid cycle reactions in the biosynthesis of the cell wall peptidoglycan: transfers peptidoglycan precursor phospho-MurNAc-pentapeptide from UDP-MurNAc-pentapeptide onto the lipid carrier undecaprenyl phosphate, yielding undecaprenyl-pyrophosphoryl-MurNAc-pentapeptide, known as lipid I. The polypeptide is Phospho-N-acetylmuramoyl-pentapeptide-transferase (Chelativorans sp. (strain BNC1)).